The following is a 204-amino-acid chain: Protein LURP-one-related 14 (204 aa).

This sequence belongs to the LOR family.

Its function is as follows. Might be related to the phospholipid scramblase and tubby-like superfamily of membrane tethered transcription factors. The chain is Protein LURP-one-related 14 from Arabidopsis thaliana (Mouse-ear cress).